A 527-amino-acid polypeptide reads, in one-letter code: Cytochrome P450 monooxygenase aba2 (527 aa).

The helical transmembrane segment at 26–46 (TTVAVLVTVALIAQVLWKIFF) threads the bilayer. Residues Asn-189, Asn-420, and Asn-448 are each glycosylated (N-linked (GlcNAc...) asparagine). Cys-460 is a binding site for heme. Asn-464 is a glycosylation site (N-linked (GlcNAc...) asparagine).

It belongs to the cytochrome P450 family. It depends on heme as a cofactor.

The protein localises to the membrane. Its pathway is hormone biosynthesis. Its function is as follows. Cytochrome P450 monooxygenase; part of the gene cluster that mediates the biosynthesis of abscisic acid (ABA), a phytohormone that acts antagonistically toward salicylic acid (SA), jasmonic acid (JA) and ethylene (ETH) signaling, to impede plant defense responses. The first step of the pathway catalyzes the reaction from farnesyl diphosphate to alpha-ionylideneethane performed by the alpha-ionylideneethane synthase aba3 via a three-step reaction mechanism involving 2 neutral intermediates, beta-farnesene and allofarnesene. The cytochrome P450 monooxygenase aba1 might then be involved in the conversion of alpha-ionylideneethane to alpha-ionylideneacetic acid. Alpha-ionylideneacetic acid is further converted to abscisic acid in 2 steps involving the cytochrome P450 monooxygenase aba2 and the short-chain dehydrogenase/reductase aba4, via the intermediates 1'-deoxy-ABA or 1',4'-trans-diol-ABA, depending on the order of action of these 2 enzymes. Aba2 is responsible for the hydroxylation of carbon atom C-1' and aba4 might be involved in the oxidation of the C-4' carbon atom. The sequence is that of Cytochrome P450 monooxygenase aba2 (aba2) from Botryotinia fuckeliana (strain B05.10) (Noble rot fungus).